We begin with the raw amino-acid sequence, 185 residues long: Ribosome maturation factor RimM (185 aa).

The region spanning 92-168 (DDDTFYHADL…GRRVVVAEAF (77 aa)) is the PRC barrel domain.

It belongs to the RimM family. In terms of assembly, binds ribosomal protein uS19.

It localises to the cytoplasm. An accessory protein needed during the final step in the assembly of 30S ribosomal subunit, possibly for assembly of the head region. Essential for efficient processing of 16S rRNA. May be needed both before and after RbfA during the maturation of 16S rRNA. It has affinity for free ribosomal 30S subunits but not for 70S ribosomes. This is Ribosome maturation factor RimM from Xanthobacter autotrophicus (strain ATCC BAA-1158 / Py2).